The primary structure comprises 233 residues: Large ribosomal subunit protein uL1 (233 aa).

Belongs to the universal ribosomal protein uL1 family. As to quaternary structure, part of the 50S ribosomal subunit.

Functionally, binds directly to 23S rRNA. The L1 stalk is quite mobile in the ribosome, and is involved in E site tRNA release. Its function is as follows. Protein L1 is also a translational repressor protein, it controls the translation of the L11 operon by binding to its mRNA. The chain is Large ribosomal subunit protein uL1 from Trichlorobacter lovleyi (strain ATCC BAA-1151 / DSM 17278 / SZ) (Geobacter lovleyi).